A 522-amino-acid chain; its full sequence is Glucose-6-phosphate isomerase (522 aa).

E351 acts as the Proton donor in catalysis. Active-site residues include H382 and K491.

This sequence belongs to the GPI family.

The protein localises to the cytoplasm. The catalysed reaction is alpha-D-glucose 6-phosphate = beta-D-fructose 6-phosphate. It functions in the pathway carbohydrate biosynthesis; gluconeogenesis. It participates in carbohydrate degradation; glycolysis; D-glyceraldehyde 3-phosphate and glycerone phosphate from D-glucose: step 2/4. Catalyzes the reversible isomerization of glucose-6-phosphate to fructose-6-phosphate. The protein is Glucose-6-phosphate isomerase of Albidiferax ferrireducens (strain ATCC BAA-621 / DSM 15236 / T118) (Rhodoferax ferrireducens).